We begin with the raw amino-acid sequence, 65 residues long: Alpha-toxin Bot1 (65 aa).

Positions 2–64 (RDAYIAQPEN…VPIRIPGKCH (63 aa)) constitute an LCN-type CS-alpha/beta domain. 4 disulfides stabilise this stretch: C12–C63, C16–C36, C22–C46, and C26–C48. Phenylalanine amide is present on F65.

It belongs to the long (4 C-C) scorpion toxin superfamily. Sodium channel inhibitor family. Alpha subfamily. As to expression, expressed by the venom gland.

It is found in the secreted. Alpha toxins bind voltage-independently at site-3 of sodium channels (Nav) and inhibit the inactivation of the activated channels, thereby blocking neuronal transmission. This Buthus occitanus tunetanus (Common European scorpion) protein is Alpha-toxin Bot1.